We begin with the raw amino-acid sequence, 142 residues long: Large ribosomal subunit protein uL13 (142 aa).

This sequence belongs to the universal ribosomal protein uL13 family. Part of the 50S ribosomal subunit.

Its function is as follows. This protein is one of the early assembly proteins of the 50S ribosomal subunit, although it is not seen to bind rRNA by itself. It is important during the early stages of 50S assembly. The polypeptide is Large ribosomal subunit protein uL13 (Bordetella petrii (strain ATCC BAA-461 / DSM 12804 / CCUG 43448)).